Reading from the N-terminus, the 196-residue chain is Putative NADH dehydrogenase/NAD(P)H nitroreductase Smlt0482 (196 aa).

The protein belongs to the nitroreductase family. HadB/RutE subfamily. FMN serves as cofactor.

The sequence is that of Putative NADH dehydrogenase/NAD(P)H nitroreductase Smlt0482 from Stenotrophomonas maltophilia (strain K279a).